A 148-amino-acid chain; its full sequence is FAD synthase (148 aa).

ATP-binding positions include 9–10 (TF), 14–17 (HPGH), asparagine 92, and tyrosine 119.

The protein belongs to the archaeal FAD synthase family. As to quaternary structure, homodimer. A divalent metal cation is required as a cofactor.

It carries out the reaction FMN + ATP + H(+) = FAD + diphosphate. It functions in the pathway cofactor biosynthesis; FAD biosynthesis; FAD from FMN: step 1/1. Functionally, catalyzes the transfer of the AMP portion of ATP to flavin mononucleotide (FMN) to produce flavin adenine dinucleotide (FAD) coenzyme. In Methanolacinia petrolearia (strain DSM 11571 / OCM 486 / SEBR 4847) (Methanoplanus petrolearius), this protein is FAD synthase.